The primary structure comprises 787 residues: DNA ligase (787 aa).

Residues 32–36 (DVEYD), 81–82 (SL), and Glu-121 contribute to the NAD(+) site. Catalysis depends on Lys-123, which acts as the N6-AMP-lysine intermediate. Residues Arg-144, Glu-181, Lys-297, and Lys-321 each contribute to the NAD(+) site. Zn(2+) contacts are provided by Cys-415, Cys-418, Cys-445, and Cys-451. A BRCT domain is found at 703–787 (VEGLPLAGQT…RLTELGVAVD (85 aa)).

It belongs to the NAD-dependent DNA ligase family. LigA subfamily. It depends on Mg(2+) as a cofactor. The cofactor is Mn(2+).

The catalysed reaction is NAD(+) + (deoxyribonucleotide)n-3'-hydroxyl + 5'-phospho-(deoxyribonucleotide)m = (deoxyribonucleotide)n+m + AMP + beta-nicotinamide D-nucleotide.. In terms of biological role, DNA ligase that catalyzes the formation of phosphodiester linkages between 5'-phosphoryl and 3'-hydroxyl groups in double-stranded DNA using NAD as a coenzyme and as the energy source for the reaction. It is essential for DNA replication and repair of damaged DNA. In Pseudomonas savastanoi pv. phaseolicola (strain 1448A / Race 6) (Pseudomonas syringae pv. phaseolicola (strain 1448A / Race 6)), this protein is DNA ligase.